The following is a 407-amino-acid chain: Phosphopentomutase (407 aa).

Residues D11, D305, H310, D346, H347, and H358 each coordinate Mn(2+).

This sequence belongs to the phosphopentomutase family. Mn(2+) is required as a cofactor.

The protein resides in the cytoplasm. The enzyme catalyses 2-deoxy-alpha-D-ribose 1-phosphate = 2-deoxy-D-ribose 5-phosphate. It carries out the reaction alpha-D-ribose 1-phosphate = D-ribose 5-phosphate. Its pathway is carbohydrate degradation; 2-deoxy-D-ribose 1-phosphate degradation; D-glyceraldehyde 3-phosphate and acetaldehyde from 2-deoxy-alpha-D-ribose 1-phosphate: step 1/2. In terms of biological role, isomerase that catalyzes the conversion of deoxy-ribose 1-phosphate (dRib-1-P) and ribose 1-phosphate (Rib-1-P) to deoxy-ribose 5-phosphate (dRib-5-P) and ribose 5-phosphate (Rib-5-P), respectively. In Legionella pneumophila (strain Paris), this protein is Phosphopentomutase.